Consider the following 642-residue polypeptide: MVYKEVQERVRLALRQALDEMLHEAGKEWDGEITFDDTPSIELGDFGTAVSFQLARVFRKAPKFIAEELVGRVKEKLPEEIRDVKAVNGYINFYLDYEFFGKALVREILEKGEKYGESELGSGKKVIVEHTSVNPTKPLHMGHARNAVLGDTMARIMRKLGYTVEVQNYIDDLGVQFAQVLWGYLNLKEEFERIEAELREKGLKEDFIDHVMGLLYVEVNKKLEENPEVDKEVRELMKKLEEGDNEIAEVGRKLAERVVRAQMLTTYRMGITYDLLSWESDIMKSGIFGEAYGLIEKNENFFWATEGKYKGAFVMDLRKLFPDMKNPFLVLRRSDGTATYTGKDIAYHLWKFGKVKADMLYKLWDRVEDHETWTTAPDGKEMPGKFGRADIVINVIGAEQKHPQMAIKYALQLLGFEDAAENFHHLAYEHVVRPEGSFSGRKGTWVGFTVDEVLNEAVQRARELVEQKNPNLSDEEKDEIAEAVGVGAVRYNLVKYSPDKVITFRWEDVLNFEGDSAPYLQYAHARCASILRKAEESGVETDWNALLEKADFSKLTNREKELIKFLAKFPEVLESAGRDVKPHLVPAYLNELASLFNRFYMDHPVLKAEEGIREERLLLVLAVKQVLRNGLDVLGIKAPERM.

Positions Val133–His143 match the 'HIGH' region motif.

It belongs to the class-I aminoacyl-tRNA synthetase family.

It is found in the cytoplasm. It catalyses the reaction tRNA(Arg) + L-arginine + ATP = L-arginyl-tRNA(Arg) + AMP + diphosphate. The chain is Arginine--tRNA ligase from Thermococcus kodakarensis (strain ATCC BAA-918 / JCM 12380 / KOD1) (Pyrococcus kodakaraensis (strain KOD1)).